Consider the following 71-residue polypeptide: Putative membrane protein insertion efficiency factor (71 aa).

The protein belongs to the UPF0161 family.

The protein resides in the cell membrane. Could be involved in insertion of integral membrane proteins into the membrane. This Ruminiclostridium cellulolyticum (strain ATCC 35319 / DSM 5812 / JCM 6584 / H10) (Clostridium cellulolyticum) protein is Putative membrane protein insertion efficiency factor.